The primary structure comprises 65 residues: Large ribosomal subunit protein uL29 (65 aa).

This sequence belongs to the universal ribosomal protein uL29 family.

This Lactobacillus acidophilus (strain ATCC 700396 / NCK56 / N2 / NCFM) protein is Large ribosomal subunit protein uL29.